The sequence spans 104 residues: uncharacterized protein (104 aa).

As to quaternary structure, homodimer.

This is an uncharacterized protein from Bacillus subtilis (strain 168).